Here is a 301-residue protein sequence, read N- to C-terminus: Protoheme IX farnesyltransferase (301 aa).

The next 9 membrane-spanning stretches (helical) occupy residues 29-49 (VVAL…PGTV), 51-71 (LVPL…AAAF), 96-116 (ISII…FIIL), 123-143 (LTAW…TAYL), 151-171 (IVVG…AVTG), 177-197 (ALLL…ALAI), 223-243 (CIFL…LVGM), 244-264 (CGPV…YKAW), and 281-301 (FSIY…YLWV).

This sequence belongs to the UbiA prenyltransferase family. Protoheme IX farnesyltransferase subfamily.

It is found in the cell inner membrane. The enzyme catalyses heme b + (2E,6E)-farnesyl diphosphate + H2O = Fe(II)-heme o + diphosphate. Its pathway is porphyrin-containing compound metabolism; heme O biosynthesis; heme O from protoheme: step 1/1. Its function is as follows. Converts heme B (protoheme IX) to heme O by substitution of the vinyl group on carbon 2 of heme B porphyrin ring with a hydroxyethyl farnesyl side group. The protein is Protoheme IX farnesyltransferase of Shewanella pealeana (strain ATCC 700345 / ANG-SQ1).